Here is a 254-residue protein sequence, read N- to C-terminus: Thiazole synthase (254 aa).

K95 acts as the Schiff-base intermediate with DXP in catalysis. Residues G156, 182–183, and 204–205 each bind 1-deoxy-D-xylulose 5-phosphate; these read AG and NT.

It belongs to the ThiG family. In terms of assembly, homotetramer. Forms heterodimers with either ThiH or ThiS.

It is found in the cytoplasm. The catalysed reaction is [ThiS sulfur-carrier protein]-C-terminal-Gly-aminoethanethioate + 2-iminoacetate + 1-deoxy-D-xylulose 5-phosphate = [ThiS sulfur-carrier protein]-C-terminal Gly-Gly + 2-[(2R,5Z)-2-carboxy-4-methylthiazol-5(2H)-ylidene]ethyl phosphate + 2 H2O + H(+). It participates in cofactor biosynthesis; thiamine diphosphate biosynthesis. In terms of biological role, catalyzes the rearrangement of 1-deoxy-D-xylulose 5-phosphate (DXP) to produce the thiazole phosphate moiety of thiamine. Sulfur is provided by the thiocarboxylate moiety of the carrier protein ThiS. In vitro, sulfur can be provided by H(2)S. In Shewanella sp. (strain MR-7), this protein is Thiazole synthase.